A 339-amino-acid chain; its full sequence is Anthranilate phosphoribosyltransferase (339 aa).

5-phospho-alpha-D-ribose 1-diphosphate is bound by residues Gly79, 82 to 83 (GD), Thr87, 89 to 92 (NIST), 107 to 115 (KHGNRAVSS), and Ser119. Position 79 (Gly79) interacts with anthranilate. Mg(2+) is bound at residue Ser91. Residue Asn110 participates in anthranilate binding. Residue Arg165 coordinates anthranilate. Mg(2+) is bound by residues Asp224 and Glu225.

Belongs to the anthranilate phosphoribosyltransferase family. In terms of assembly, homodimer. Mg(2+) serves as cofactor.

The enzyme catalyses N-(5-phospho-beta-D-ribosyl)anthranilate + diphosphate = 5-phospho-alpha-D-ribose 1-diphosphate + anthranilate. The protein operates within amino-acid biosynthesis; L-tryptophan biosynthesis; L-tryptophan from chorismate: step 2/5. Its function is as follows. Catalyzes the transfer of the phosphoribosyl group of 5-phosphorylribose-1-pyrophosphate (PRPP) to anthranilate to yield N-(5'-phosphoribosyl)-anthranilate (PRA). This is Anthranilate phosphoribosyltransferase from Geobacillus thermodenitrificans (strain NG80-2).